Consider the following 70-residue polypeptide: MSNSTTGLVKWFNEEKGFGFITQDNGGDDVFVHFRSITSDGFKTLAEGQKVSFEVEQGQKGLQAANVVAL.

Residues 7 to 67 (GLVKWFNEEK…GQKGLQAANV (61 aa)) form the CSD domain.

It is found in the cytoplasm. The sequence is that of Cold shock-like protein CspG (cspG) from Shewanella violacea (strain JCM 10179 / CIP 106290 / LMG 19151 / DSS12).